Reading from the N-terminus, the 199-residue chain is SCO2-like protein RC0042 (199 aa).

This sequence belongs to the SCO1/2 family.

The protein is SCO2-like protein RC0042 of Rickettsia conorii (strain ATCC VR-613 / Malish 7).